The chain runs to 82 residues: APECGERASGKRCPNGKCCSQWGYCGTTDNYCGQGCQSQCDYWRCGRDFGGRLCEEDMCCSKYGWCGYSDDHCEDGCQSQCD.

Chitin-binding type-1 domains follow at residues 1 to 42 and 43 to 82; these read APEC…QCDY and WRCG…SQCD. Intrachain disulfides connect Cys-4–Cys-19, Cys-13–Cys-25, Cys-18–Cys-32, and Cys-36–Cys-40. 4 residues coordinate a carbohydrate: Ser-20, Trp-22, Tyr-24, and Tyr-31. Residue Trp-43 coordinates a carbohydrate. Disulfide bonds link Cys-45–Cys-60, Cys-54–Cys-66, Cys-59–Cys-73, and Cys-77–Cys-81. A carbohydrate is bound by residues Ser-61, Tyr-63, Trp-65, and His-72.

Monomer.

N-acetyl-D-glucosamine binding lectin. Shows no hemagglutinating activity towards rabbit erythrocytes and weak activity towards trypsin-treated erythrocytes. Has mitogenic activity towards human peripheral blood lymphocytes (HPBL). This is Lectin-D2 from Phytolacca americana (American pokeweed).